Reading from the N-terminus, the 66-residue chain is Myrmicitoxin(1)-Pr5a (66 aa).

A signal peptide spans M1–A25. A propeptide spanning residues I26 to P37 is cleaved from the precursor. Valine amide is present on V65.

It belongs to the formicidae venom clade 3 family. As to expression, expressed by the venom gland.

Its subcellular location is the secreted. Functionally, toxin that causes a rapid and irreversible paralysis when intrathoracically injected into insects (blowflies). Does not cause spontaneous nocifensive behaviors by intraplantar injection in mice. Exhibits hemolytic and cytotoxic activities on HEK293 cells. The sequence is that of Myrmicitoxin(1)-Pr5a from Pogonomyrmex rugosus (Desert harvester ant).